Reading from the N-terminus, the 126-residue chain is Large-conductance mechanosensitive channel (126 aa).

2 consecutive transmembrane segments (helical) span residues 14–34 and 69–89; these read VLDLAVGVIIGGAFTGIVKSL and GAFLNDVINFLITAFVVFLLV.

It belongs to the MscL family. Homopentamer.

Its subcellular location is the cell membrane. Channel that opens in response to stretch forces in the membrane lipid bilayer. May participate in the regulation of osmotic pressure changes within the cell. In Leuconostoc citreum (strain KM20), this protein is Large-conductance mechanosensitive channel.